The sequence spans 462 residues: Elongation factor 1-alpha (462 aa).

Gly-2 bears the Blocked amino end (Gly) mark. Residues 5–242 (KIHINIVVIG…DAILPPSRPT (238 aa)) enclose the tr-type G domain. Positions 14–21 (GHVDSGKS) are G1. Residue 14–21 (GHVDSGKS) participates in GTP binding. Lys-36 carries the post-translational modification N6,N6,N6-trimethyllysine. Lys-55 carries the N6-methyllysine modification. The interval 70–74 (GITID) is G2. Lys-79 is modified (N6,N6,N6-trimethyllysine). Positions 91-94 (DAPG) are G3. GTP-binding positions include 91–95 (DAPGH) and 153–156 (NKMD). Residues 153–156 (NKMD) are G4. The tract at residues 194 to 196 (SGW) is G5. N6,N6,N6-trimethyllysine occurs at positions 219 and 318. 5-glutamyl glycerylphosphorylethanolamine is present on Glu-374.

The protein belongs to the TRAFAC class translation factor GTPase superfamily. Classic translation factor GTPase family. EF-Tu/EF-1A subfamily. The N-terminus is blocked.

The protein resides in the cytoplasm. Its function is as follows. This protein promotes the GTP-dependent binding of aminoacyl-tRNA to the A-site of ribosomes during protein biosynthesis. The protein is Elongation factor 1-alpha of Artemia salina (Brine shrimp).